The chain runs to 1077 residues: Bifunctional helicase and thymine dioxygenase JBP2 (1077 aa).

The tract at residues 1–516 (MPMFMDGASQ…PPLCIPFKIA (516 aa)) is thymine dioxygenase. Residues H391, D393, and H441 each contribute to the Fe cation site. R455 lines the 2-oxoglutarate pocket. The DNA Helicase stretch occupies residues 517 to 1075 (KTLSLTQHAA…RNIDTVKSER (559 aa)). In terms of domain architecture, Helicase ATP-binding spans 531 to 706 (SRRIKEGDGC…YRLVGWVDDK (176 aa)). 544 to 551 (LTMGLGKT) provides a ligand contact to ATP. The short motif at 657-660 (DEGH) is the DEAH box element. Residues 871–1032 (KLTALISILH…QVVPGHDLVD (162 aa)) form the Helicase C-terminal domain.

It in the C-terminal section; belongs to the SNF2/RAD54 helicase family. This sequence in the N-terminal section; belongs to the TET family. JBP2 subfamily. The cofactor is Fe(2+).

The protein resides in the nucleus. The catalysed reaction is ATP + H2O = ADP + phosphate + H(+). It catalyses the reaction thymine + 2-oxoglutarate + O2 = 5-hydroxymethyluracil + succinate + CO2. Dioxygenase that catalyzes the first step of DNA base J (beta-d-glucosyl-HOMedU) biosynthesis by converting thymine to 5-hydroxymethyluracil (HOMedU). DNA base J is a hypermodified thymidine residue found in the genome of kinetoplastid parasites, which is localized primarily to repetitive DNA, namely the telomeres, and is implicated in the regulation of antigenic variation. Probably also acts as a DNA helicase. Recognizes and binds specific regions of the genome, hydrolyzes ATP and allows the DNA base J de novo synthesis. Involved in initial synthesis of DNA base J, JBP1 being able to act via the basal level of DNA base J and propagate further synthesis. In contrast to JBP1, it does not specifically bind DNA base J, however it binds chromatin. The chain is Bifunctional helicase and thymine dioxygenase JBP2 (JBP2) from Trypanosoma brucei brucei (strain 927/4 GUTat10.1).